We begin with the raw amino-acid sequence, 176 residues long: Isopentenyl-diphosphate Delta-isomerase (176 aa).

Mn(2+) contacts are provided by His-24 and His-30. Residues 28 to 160 (LLHRAFSIFV…PSAFTVWFHC (133 aa)) form the Nudix hydrolase domain. Cys-65 is an active-site residue. His-67 serves as a coordination point for Mn(2+). Residue Glu-85 coordinates Mg(2+). 2 residues coordinate Mn(2+): Glu-110 and Glu-112. Residue Glu-112 is part of the active site.

It belongs to the IPP isomerase type 1 family. Requires Mg(2+) as cofactor. The cofactor is Mn(2+).

Its subcellular location is the cytoplasm. The catalysed reaction is isopentenyl diphosphate = dimethylallyl diphosphate. It functions in the pathway isoprenoid biosynthesis; dimethylallyl diphosphate biosynthesis; dimethylallyl diphosphate from isopentenyl diphosphate: step 1/1. Its function is as follows. Catalyzes the 1,3-allylic rearrangement of the homoallylic substrate isopentenyl (IPP) to its highly electrophilic allylic isomer, dimethylallyl diphosphate (DMAPP). The sequence is that of Isopentenyl-diphosphate Delta-isomerase from Burkholderia multivorans (strain ATCC 17616 / 249).